The primary structure comprises 123 residues: Fluoride-specific ion channel FluC 2 (123 aa).

A run of 3 helical transmembrane segments spans residues 30 to 50 (FPLP…FVAG), 68 to 88 (VGFI…VLLL), and 93 to 113 (WPLA…AVWV). Na(+)-binding residues include Gly-72 and Thr-75.

It belongs to the fluoride channel Fluc/FEX (TC 1.A.43) family.

It localises to the cell membrane. The enzyme catalyses fluoride(in) = fluoride(out). Na(+) is not transported, but it plays an essential structural role and its presence is essential for fluoride channel function. Functionally, fluoride-specific ion channel. Important for reducing fluoride concentration in the cell, thus reducing its toxicity. This is Fluoride-specific ion channel FluC 2 from Symbiobacterium thermophilum (strain DSM 24528 / JCM 14929 / IAM 14863 / T).